The primary structure comprises 331 residues: Ferredoxin--NADP reductase (331 aa).

Residues glutamate 34, glutamine 42, tyrosine 47, valine 87, phenylalanine 121, aspartate 285, and threonine 325 each contribute to the FAD site.

Belongs to the ferredoxin--NADP reductase type 2 family. Homodimer. The cofactor is FAD.

The enzyme catalyses 2 reduced [2Fe-2S]-[ferredoxin] + NADP(+) + H(+) = 2 oxidized [2Fe-2S]-[ferredoxin] + NADPH. This is Ferredoxin--NADP reductase from Lactiplantibacillus plantarum (strain ATCC BAA-793 / NCIMB 8826 / WCFS1) (Lactobacillus plantarum).